A 389-amino-acid polypeptide reads, in one-letter code: Glycerol-3-phosphate dehydrogenase [NAD(+)] 2 (389 aa).

NAD(+)-binding positions include 40–45 (GSGNWG), F128, K151, and A184. K151 contributes to the substrate binding site. K244 (proton acceptor) is an active-site residue. NAD(+) contacts are provided by R309 and Q338. 309–310 (RN) contacts substrate.

The protein belongs to the NAD-dependent glycerol-3-phosphate dehydrogenase family.

The protein localises to the cytoplasm. The enzyme catalyses sn-glycerol 3-phosphate + NAD(+) = dihydroxyacetone phosphate + NADH + H(+). In Zygosaccharomyces rouxii, this protein is Glycerol-3-phosphate dehydrogenase [NAD(+)] 2 (GPD2).